The chain runs to 118 residues: Phospholipase A2 'basic' (118 aa).

Disulfide bonds link cysteine 11–cysteine 70, cysteine 26–cysteine 117, cysteine 28–cysteine 44, cysteine 43–cysteine 98, cysteine 50–cysteine 91, cysteine 59–cysteine 84, and cysteine 77–cysteine 89. Ca(2+) is bound by residues tyrosine 27, glycine 29, and glycine 31. Residue histidine 47 is part of the active site. Aspartate 48 lines the Ca(2+) pocket. Residues 52–69 (EKAGKMGCWPYLTLYKYK) carry the Coagulation factor Xa binding motif motif. Aspartate 92 is a catalytic residue.

This sequence belongs to the phospholipase A2 family. Group I subfamily. D49 sub-subfamily. Ca(2+) is required as a cofactor. In terms of tissue distribution, expressed by the venom gland.

Its subcellular location is the secreted. The enzyme catalyses a 1,2-diacyl-sn-glycero-3-phosphocholine + H2O = a 1-acyl-sn-glycero-3-phosphocholine + a fatty acid + H(+). Its function is as follows. Snake venom phospholipase A2 (PLA2) that shows strong anticoagulant activity. Binds directly with the coagulation factor FXa (F10) and blocks the formation of the prothombinase complex. Acts by a nonenzymatic mechanism. Also inhibits the complex composed of tissue factor (F3) and coagulation factor VIIa (F7) (TF-VIIa complex) by both enzymatic and nonenzymatic mechanisms. PLA2 catalyzes the calcium-dependent hydrolysis of the 2-acyl groups in 3-sn-phosphoglycerides. This Naja nigricollis (Black-necked spitting cobra) protein is Phospholipase A2 'basic'.